The chain runs to 428 residues: Glutamate-1-semialdehyde 2,1-aminomutase (428 aa).

Position 267 is an N6-(pyridoxal phosphate)lysine (Lys267).

The protein belongs to the class-III pyridoxal-phosphate-dependent aminotransferase family. HemL subfamily. As to quaternary structure, homodimer. Pyridoxal 5'-phosphate is required as a cofactor.

The protein resides in the cytoplasm. The catalysed reaction is (S)-4-amino-5-oxopentanoate = 5-aminolevulinate. Its pathway is porphyrin-containing compound metabolism; protoporphyrin-IX biosynthesis; 5-aminolevulinate from L-glutamyl-tRNA(Glu): step 2/2. This Sulfurihydrogenibium sp. (strain YO3AOP1) protein is Glutamate-1-semialdehyde 2,1-aminomutase.